Here is a 179-residue protein sequence, read N- to C-terminus: MAIIAKKYAQALYETSLDKDVLDLMYDEFAAVDEAVIPNQDKLKAFDSDPKNIAEDRNSLVESAFKGINEYLKNMLFVMAENRHLSILPEVFKAFEGLYNQYYNQDFATVESVHELSQDELDKVGEALIQRTGLSKLIITNVINKSLIGGIRAKVGTKVFDGSIQNDLAQIERKFIRTK.

The protein belongs to the ATPase delta chain family. In terms of assembly, F-type ATPases have 2 components, F(1) - the catalytic core - and F(0) - the membrane proton channel. F(1) has five subunits: alpha(3), beta(3), gamma(1), delta(1), epsilon(1). F(0) has three main subunits: a(1), b(2) and c(10-14). The alpha and beta chains form an alternating ring which encloses part of the gamma chain. F(1) is attached to F(0) by a central stalk formed by the gamma and epsilon chains, while a peripheral stalk is formed by the delta and b chains.

The protein localises to the cell membrane. F(1)F(0) ATP synthase produces ATP from ADP in the presence of a proton or sodium gradient. F-type ATPases consist of two structural domains, F(1) containing the extramembraneous catalytic core and F(0) containing the membrane proton channel, linked together by a central stalk and a peripheral stalk. During catalysis, ATP synthesis in the catalytic domain of F(1) is coupled via a rotary mechanism of the central stalk subunits to proton translocation. Its function is as follows. This protein is part of the stalk that links CF(0) to CF(1). It either transmits conformational changes from CF(0) to CF(1) or is implicated in proton conduction. This chain is ATP synthase subunit delta, found in Staphylococcus carnosus (strain TM300).